The chain runs to 251 residues: UPF0309 protein GK1441 (251 aa).

The SIS domain occupies 31-214 (VSEAIQNGGI…VLMAENGIEP (184 aa)).

It belongs to the UPF0309 family.

This chain is UPF0309 protein GK1441, found in Geobacillus kaustophilus (strain HTA426).